Here is a 306-residue protein sequence, read N- to C-terminus: tRNA pseudouridine synthase B (306 aa).

Aspartate 48 (nucleophile) is an active-site residue.

The protein belongs to the pseudouridine synthase TruB family. Type 1 subfamily.

The catalysed reaction is uridine(55) in tRNA = pseudouridine(55) in tRNA. Responsible for synthesis of pseudouridine from uracil-55 in the psi GC loop of transfer RNAs. This chain is tRNA pseudouridine synthase B, found in Chromobacterium violaceum (strain ATCC 12472 / DSM 30191 / JCM 1249 / CCUG 213 / NBRC 12614 / NCIMB 9131 / NCTC 9757 / MK).